A 601-amino-acid chain; its full sequence is Glutathione-regulated potassium-efflux system protein KefB (601 aa).

The next 13 membrane-spanning stretches (helical) occupy residues 5–25, 29–49, 55–75, 87–107, 115–135, 152–172, 180–202, 207–227, 230–250, 268–288, 291–311, 324–344, and 356–376; these read SLLM…PLAA, IGAV…GLGF, EILH…GLEL, IFGV…GLLW, AAII…LQLM, VLLF…LLAG, WMKL…YLLR, FIAA…LVLG, LFME…GILL, GLLL…GVLY, ILEI…VLYL, LQFS…FSAA, and PLLL…MQGV. Residues 400–519 enclose the RCK N-terminal domain; sequence KPQVIVVGFG…AGVTQFSRET (120 aa).

Belongs to the monovalent cation:proton antiporter 2 (CPA2) transporter (TC 2.A.37) family. KefB subfamily. Interacts with the regulatory subunit KefG.

It is found in the cell inner membrane. In terms of biological role, pore-forming subunit of a potassium efflux system that confers protection against electrophiles. Catalyzes K(+)/H(+) antiport. The sequence is that of Glutathione-regulated potassium-efflux system protein KefB from Erwinia tasmaniensis (strain DSM 17950 / CFBP 7177 / CIP 109463 / NCPPB 4357 / Et1/99).